Consider the following 249-residue polypeptide: tRNA (guanine-N(1)-)-methyltransferase (249 aa).

S-adenosyl-L-methionine contacts are provided by residues G113 and 133–138 (IGDYVL).

Belongs to the RNA methyltransferase TrmD family. Homodimer.

It localises to the cytoplasm. It carries out the reaction guanosine(37) in tRNA + S-adenosyl-L-methionine = N(1)-methylguanosine(37) in tRNA + S-adenosyl-L-homocysteine + H(+). Specifically methylates guanosine-37 in various tRNAs. This chain is tRNA (guanine-N(1)-)-methyltransferase, found in Aeromonas hydrophila subsp. hydrophila (strain ATCC 7966 / DSM 30187 / BCRC 13018 / CCUG 14551 / JCM 1027 / KCTC 2358 / NCIMB 9240 / NCTC 8049).